Reading from the N-terminus, the 319-residue chain is tRNA dimethylallyltransferase (319 aa).

ATP is bound at residue 9 to 16; the sequence is GPTAVGKS. 11-16 lines the substrate pocket; sequence TAVGKS. The segment at 39–42 is interaction with substrate tRNA; it reads DSMQ.

It belongs to the IPP transferase family. As to quaternary structure, monomer. Requires Mg(2+) as cofactor.

The catalysed reaction is adenosine(37) in tRNA + dimethylallyl diphosphate = N(6)-dimethylallyladenosine(37) in tRNA + diphosphate. In terms of biological role, catalyzes the transfer of a dimethylallyl group onto the adenine at position 37 in tRNAs that read codons beginning with uridine, leading to the formation of N6-(dimethylallyl)adenosine (i(6)A). This is tRNA dimethylallyltransferase from Thermobifida fusca (strain YX).